An 86-amino-acid chain; its full sequence is Cytochrome c oxidase subunit 6B1 (86 aa).

An N-acetylalanine modification is found at A2. The region spanning 27–73 (TRNCWQNYLDFHRCQKAMTAKGGDISVCEWYQRVYQSLCPTSWVTDW) is the CHCH domain. The Cx9C motif motif lies at 30 to 40 (CWQNYLDFHRC). 2 disulfide bridges follow: C30–C65 and C40–C54. Positions 54 to 65 (CEWYQRVYQSLC) match the Cx10C motif motif.

Belongs to the cytochrome c oxidase subunit 6B family. As to quaternary structure, component of the cytochrome c oxidase (complex IV, CIV), a multisubunit enzyme composed of 14 subunits. The complex is composed of a catalytic core of 3 subunits MT-CO1, MT-CO2 and MT-CO3, encoded in the mitochondrial DNA, and 11 supernumerary subunits COX4I, COX5A, COX5B, COX6A, COX6B, COX6C, COX7A, COX7B, COX7C, COX8 and NDUFA4, which are encoded in the nuclear genome. The complex exists as a monomer or a dimer and forms supercomplexes (SCs) in the inner mitochondrial membrane with NADH-ubiquinone oxidoreductase (complex I, CI) and ubiquinol-cytochrome c oxidoreductase (cytochrome b-c1 complex, complex III, CIII), resulting in different assemblies (supercomplex SCI(1)III(2)IV(1) and megacomplex MCI(2)III(2)IV(2)).

It localises to the mitochondrion inner membrane. It participates in energy metabolism; oxidative phosphorylation. In terms of biological role, component of the cytochrome c oxidase, the last enzyme in the mitochondrial electron transport chain which drives oxidative phosphorylation. The respiratory chain contains 3 multisubunit complexes succinate dehydrogenase (complex II, CII), ubiquinol-cytochrome c oxidoreductase (cytochrome b-c1 complex, complex III, CIII) and cytochrome c oxidase (complex IV, CIV), that cooperate to transfer electrons derived from NADH and succinate to molecular oxygen, creating an electrochemical gradient over the inner membrane that drives transmembrane transport and the ATP synthase. Cytochrome c oxidase is the component of the respiratory chain that catalyzes the reduction of oxygen to water. Electrons originating from reduced cytochrome c in the intermembrane space (IMS) are transferred via the dinuclear copper A center (CU(A)) of subunit 2 and heme A of subunit 1 to the active site in subunit 1, a binuclear center (BNC) formed by heme A3 and copper B (CU(B)). The BNC reduces molecular oxygen to 2 water molecules using 4 electrons from cytochrome c in the IMS and 4 protons from the mitochondrial matrix. In Pongo abelii (Sumatran orangutan), this protein is Cytochrome c oxidase subunit 6B1 (COX6B1).